Reading from the N-terminus, the 240-residue chain is Probable transcriptional regulatory protein A2cp1_1765 (240 aa).

The protein belongs to the TACO1 family.

The protein localises to the cytoplasm. The polypeptide is Probable transcriptional regulatory protein A2cp1_1765 (Anaeromyxobacter dehalogenans (strain 2CP-1 / ATCC BAA-258)).